A 533-amino-acid polypeptide reads, in one-letter code: CTP synthase (533 aa).

Positions 1 to 269 are amidoligase domain; it reads MKKNLKILVI…HEILSSKLNI (269 aa). A CTP-binding site is contributed by serine 16. Serine 16 contacts UTP. Residues 17-22 and aspartate 73 each bind ATP; that span reads GIGKGV. Mg(2+) contacts are provided by aspartate 73 and glutamate 143. CTP is bound by residues 150–152, 190–195, and lysine 226; these read DME and KSKPTQ. Residues 190–195 and lysine 226 each bind UTP; that span reads KSKPTQ. Residues 304–533 form the Glutamine amidotransferase type-1 domain; sequence YAELDDSYAS…LFLGLIKACI (230 aa). Glycine 355 contributes to the L-glutamine binding site. Cysteine 382 (nucleophile; for glutamine hydrolysis) is an active-site residue. Residues 383-386, glutamate 406, and arginine 466 each bind L-glutamine; that span reads LGLQ. Catalysis depends on residues histidine 511 and glutamate 513.

The protein belongs to the CTP synthase family. As to quaternary structure, homotetramer.

It catalyses the reaction UTP + L-glutamine + ATP + H2O = CTP + L-glutamate + ADP + phosphate + 2 H(+). The enzyme catalyses L-glutamine + H2O = L-glutamate + NH4(+). It carries out the reaction UTP + NH4(+) + ATP = CTP + ADP + phosphate + 2 H(+). It functions in the pathway pyrimidine metabolism; CTP biosynthesis via de novo pathway; CTP from UDP: step 2/2. Allosterically activated by GTP, when glutamine is the substrate; GTP has no effect on the reaction when ammonia is the substrate. The allosteric effector GTP functions by stabilizing the protein conformation that binds the tetrahedral intermediate(s) formed during glutamine hydrolysis. Inhibited by the product CTP, via allosteric rather than competitive inhibition. Catalyzes the ATP-dependent amination of UTP to CTP with either L-glutamine or ammonia as the source of nitrogen. Regulates intracellular CTP levels through interactions with the four ribonucleotide triphosphates. This is CTP synthase from Borreliella afzelii (strain PKo) (Borrelia afzelii).